A 170-amino-acid polypeptide reads, in one-letter code: Ureidoglycolate lyase (170 aa).

This sequence belongs to the ureidoglycolate lyase family. In terms of assembly, homodimer. It depends on Ni(2+) as a cofactor.

It catalyses the reaction (S)-ureidoglycolate = urea + glyoxylate. It functions in the pathway nitrogen metabolism; (S)-allantoin degradation. Functionally, catalyzes the catabolism of the allantoin degradation intermediate (S)-ureidoglycolate, generating urea and glyoxylate. Involved in the utilization of allantoin as nitrogen source. This chain is Ureidoglycolate lyase, found in Burkholderia mallei (strain NCTC 10247).